A 143-amino-acid chain; its full sequence is Transcriptional regulator MraZ (143 aa).

SpoVT-AbrB domains lie at glutamate 5–glutamate 47 and alanine 76–arginine 119.

This sequence belongs to the MraZ family. In terms of assembly, forms oligomers.

Its subcellular location is the cytoplasm. It is found in the nucleoid. In Lactobacillus johnsonii (strain CNCM I-12250 / La1 / NCC 533), this protein is Transcriptional regulator MraZ.